A 62-amino-acid polypeptide reads, in one-letter code: Venom peptide 6 (62 aa).

The first 26 residues, 1–26 (MKSTSVFILFAGIAIMACLQMTGTEA), serve as a signal peptide directing secretion. AXPX repeat units lie at residues 26–29 (AAPS), 30–33 (ASPN), and 40–43 (ADPD). A propeptide spanning residues 27–46 (APSASPNPTPVARADPDPEA) is cleaved from the precursor.

It belongs to the MCD family. As to expression, expressed by the venom gland.

It localises to the secreted. Its subcellular location is the target cell membrane. Functionally, antimicrobial peptide with strong activity against the fungus B.cinerea (MIC=5 uM) and the Gram-positive bacterium S.aureus (MIC=50 uM), and no activity against C.albicans (MIC&gt;200 uM), and the Gram-negative bacterium E.coli (MIC&gt;200 uM). Shows cytolytic activity against insect cell lines. Has no hemolytic activity against human erythrocytes. In vivo, peptide injection in the vicinity of the head and thorax of lepidopteran larvae induces feeding disorder that lasts one or two days before recovering. This chain is Venom peptide 6, found in Eumenes pomiformis (Potter wasp).